A 187-amino-acid polypeptide reads, in one-letter code: UPF0167 protein MT2352 (187 aa).

It belongs to the UPF0167 family.

The chain is UPF0167 protein MT2352 from Mycobacterium tuberculosis (strain CDC 1551 / Oshkosh).